Reading from the N-terminus, the 866-residue chain is Phospholipase D gamma 3 (866 aa).

The 140-residue stretch at 31–170 folds into the C2 domain; sequence PFDTSSGSLR…CSGNRIEGLF (140 aa). Asp232 is a Ca(2+) binding site. Residues 371 to 406 enclose the PLD phosphodiesterase 1 domain; that stretch reads TIYTHHQKTMIVDAEAAQNRRKIVAFVGGLDLCNGR. Catalysis depends on residues His376, Lys378, and Asp383. Position 376 (His376) interacts with a 1,2-diacyl-sn-glycero-3-phosphate. Ca(2+) contacts are provided by His412 and His444. Gln572 is an a 1,2-diacyl-sn-glycero-3-phosphate binding site. The residue at position 692 (Ser692) is a Phosphoserine. Residues 712-739 form the PLD phosphodiesterase 2 domain; that stretch reads FMIYVHSKGMVVDDEFVLIGSANINQRS. Active-site residues include His717, Lys719, and Asp724. Residue His717 participates in a 1,2-diacyl-sn-glycero-3-phosphate binding. Position 780 (Glu780) interacts with Ca(2+).

It belongs to the phospholipase D family. C2-PLD subfamily. It depends on Ca(2+) as a cofactor. Highly expressed in inflorescences and old leaves, moderately in stems, roots, siliques and young leaves and low in flowers.

Its subcellular location is the cytoplasm. The protein localises to the membrane. The catalysed reaction is a 1,2-diacyl-sn-glycero-3-phosphocholine + H2O = a 1,2-diacyl-sn-glycero-3-phosphate + choline + H(+). Its activity is regulated as follows. Inhibited by neomycin. Functionally, hydrolyzes glycerol-phospholipids at the terminal phosphodiesteric bond to generate phosphatidic acids (PA). Plays an important role in various cellular processes, including phytohormone action, vesicular trafficking, secretion, cytoskeletal arrangement, meiosis, tumor promotion, pathogenesis, membrane deterioration and senescence. Can use phosphatidylserine but prefers ethanolamine-containing lipids as substrates. In Arabidopsis thaliana (Mouse-ear cress), this protein is Phospholipase D gamma 3.